The sequence spans 217 residues: Adapter protein MecA (217 aa).

Belongs to the MecA family. In terms of assembly, homodimer.

Its function is as follows. Enables the recognition and targeting of unfolded and aggregated proteins to the ClpC protease or to other proteins involved in proteolysis. In Listeria monocytogenes serovar 1/2a (strain ATCC BAA-679 / EGD-e), this protein is Adapter protein MecA.